The primary structure comprises 118 residues: UPF0102 protein Swit_0572 (118 aa).

Belongs to the UPF0102 family.

The sequence is that of UPF0102 protein Swit_0572 from Rhizorhabdus wittichii (strain DSM 6014 / CCUG 31198 / JCM 15750 / NBRC 105917 / EY 4224 / RW1) (Sphingomonas wittichii).